Reading from the N-terminus, the 233-residue chain is Lipoprotein-releasing system ATP-binding protein LolD (233 aa).

The ABC transporter domain maps to 9-233; the sequence is LAINAVSKVF…GILSQSETHR (225 aa). 45–52 is an ATP binding site; that stretch reads GSSGSGKS.

The protein belongs to the ABC transporter superfamily. Lipoprotein translocase (TC 3.A.1.125) family. As to quaternary structure, the complex is composed of two ATP-binding proteins (LolD) and two transmembrane proteins (LolC and LolE).

It is found in the cell inner membrane. In terms of biological role, part of the ABC transporter complex LolCDE involved in the translocation of mature outer membrane-directed lipoproteins, from the inner membrane to the periplasmic chaperone, LolA. Responsible for the formation of the LolA-lipoprotein complex in an ATP-dependent manner. The sequence is that of Lipoprotein-releasing system ATP-binding protein LolD from Shewanella denitrificans (strain OS217 / ATCC BAA-1090 / DSM 15013).